The primary structure comprises 185 residues: Probable nicotinate-nucleotide adenylyltransferase (185 aa).

This sequence belongs to the NadD family.

It carries out the reaction nicotinate beta-D-ribonucleotide + ATP + H(+) = deamido-NAD(+) + diphosphate. It participates in cofactor biosynthesis; NAD(+) biosynthesis; deamido-NAD(+) from nicotinate D-ribonucleotide: step 1/1. Its function is as follows. Catalyzes the reversible adenylation of nicotinate mononucleotide (NaMN) to nicotinic acid adenine dinucleotide (NaAD). The sequence is that of Probable nicotinate-nucleotide adenylyltransferase from Methylorubrum extorquens (strain CM4 / NCIMB 13688) (Methylobacterium extorquens).